The following is a 148-amino-acid chain: Wheatwin-2 (148 aa).

The first 23 residues, 1-23 (MTMAARLMLVAALLCAAAAAATA), serve as a signal peptide directing secretion. Gln-24 carries the pyrrolidone carboxylic acid modification. The Barwin domain occupies 24-148 (QQATNVRATY…VNYQFVDCRD (125 aa)). Intrachain disulfides connect Cys-54/Cys-86, Cys-75/Cys-109, and Cys-89/Cys-146.

As to quaternary structure, monomer.

In terms of biological role, shows antifungal activity towards B.cinerea and towards the wheat-specific pathogenic fungi F.culmorum and F.graminearum (groups 1 and 2). The polypeptide is Wheatwin-2 (PR4B) (Triticum aestivum (Wheat)).